Consider the following 154-residue polypeptide: 17.4 kDa class I heat shock protein (154 aa).

One can recognise a sHSP domain in the interval 40 to 154; the sequence is DAAAFAGARI…PDVKSIQITG (115 aa).

Belongs to the small heat shock protein (HSP20) family. As to quaternary structure, may form oligomeric structures.

Its subcellular location is the cytoplasm. This chain is 17.4 kDa class I heat shock protein (HSP17.4), found in Oryza sativa subsp. japonica (Rice).